Consider the following 140-residue polypeptide: MSSEEKLAAKVSTKASDVASDIGSFIRSQRETAHVSMRQLAERSGVSNPYLSQVERGLRKPSADVLSQIAKALRVSAEVLYVRAGILEPSETSQVRDAIITDTAITERQKQILLDIYASFTHQNEATREECPSDPTPTDD.

The HTH cro/C1-type domain occupies 26 to 80 (IRSQRETAHVSMRQLAERSGVSNPYLSQVERGLRKPSADVLSQIAKALRVSAEVL). A DNA-binding region (H-T-H motif) is located at residues 37 to 56 (MRQLAERSGVSNPYLSQVER).

This is an uncharacterized protein from Mycobacterium tuberculosis (strain ATCC 25618 / H37Rv).